The chain runs to 181 residues: Large ribosomal subunit protein uL5 (181 aa).

It belongs to the universal ribosomal protein uL5 family. As to quaternary structure, part of the 50S ribosomal subunit; part of the 5S rRNA/L5/L18/L25 subcomplex. Contacts the 5S rRNA and the P site tRNA. Forms a bridge to the 30S subunit in the 70S ribosome.

Functionally, this is one of the proteins that bind and probably mediate the attachment of the 5S RNA into the large ribosomal subunit, where it forms part of the central protuberance. In the 70S ribosome it contacts protein S13 of the 30S subunit (bridge B1b), connecting the 2 subunits; this bridge is implicated in subunit movement. Contacts the P site tRNA; the 5S rRNA and some of its associated proteins might help stabilize positioning of ribosome-bound tRNAs. This Aster yellows witches'-broom phytoplasma (strain AYWB) protein is Large ribosomal subunit protein uL5.